Here is a 76-residue protein sequence, read N- to C-terminus: MKVAIIILSLALVAAVFADQNCDIGNITSQCQMQHKNCEDANGCDTIIEECKTSMVERCQNQEFESAAGSTTLGPQ.

Residues 1–18 form the signal peptide; sequence MKVAIIILSLALVAAVFA. Cystine bridges form between Cys22–Cys59, Cys31–Cys51, and Cys38–Cys44. Asn26 is a glycosylation site (N-linked (GlcNAc...) asparagine).

Binds to temptin and enticin. In terms of tissue distribution, produced by the albumen gland of the egg cordons.

It is found in the secreted. Functionally, water-borne pheromone that attract the marine mollusk Aplysia into breeding aggregations and coordinate male and female reproductive behavior within the aggregation. This chain is Attractin (ATT), found in Aplysia californica (California sea hare).